The following is a 395-amino-acid chain: Phosphoglycerate kinase (395 aa).

Substrate contacts are provided by residues 22 to 24, arginine 38, 61 to 64, arginine 119, and arginine 152; these read DFN and HLGR. ATP-binding positions include lysine 203, glycine 294, glutamate 325, and 351-354; that span reads GGDT.

Belongs to the phosphoglycerate kinase family. As to quaternary structure, monomer.

It localises to the cytoplasm. It carries out the reaction (2R)-3-phosphoglycerate + ATP = (2R)-3-phospho-glyceroyl phosphate + ADP. Its pathway is carbohydrate degradation; glycolysis; pyruvate from D-glyceraldehyde 3-phosphate: step 2/5. In Hydrogenobaculum sp. (strain Y04AAS1), this protein is Phosphoglycerate kinase.